The following is a 483-amino-acid chain: Scarecrow-like protein 26 (483 aa).

Residues 95-477 (KTDESKGLRL…RRLVSASFWA (383 aa)) enclose the GRAS domain. A leucine repeat I (LRI) region spans residues 102 to 165 (LRLVHLLVAA…SKLLERDSVL (64 aa)). Positions 184–251 (FELLQNMSPY…PSAQHLRITA (68 aa)) are VHIID. Residues 215–219 (IHIVD) carry the VHIID motif. The tract at residues 267–299 (ETGRRLTAFADSIGQPFSYQHCKLDTNAFSTSS) is leucine repeat II (LRII). The segment at 308-400 (VVINCMLHLP…RVFIGPWVAN (93 aa)) is PFYRE. The tract at residues 403-477 (TRITANDAEV…RRLVSASFWA (75 aa)) is SAW.

This sequence belongs to the GRAS family. In terms of tissue distribution, expressed in seedlings, roots, leaves and flowers.

The protein localises to the nucleus. Probable transcription factor involved in plant development. This chain is Scarecrow-like protein 26 (SCL26), found in Arabidopsis thaliana (Mouse-ear cress).